We begin with the raw amino-acid sequence, 697 residues long: Portal protein (697 aa).

The interval 633–697 is disordered; the sequence is MSREAAGGVP…RRAGGPYGFH (65 aa). Positions 664–689 are enriched in basic and acidic residues; it reads ITADEERRGPERVGRFRNGGPDDPRR.

Belongs to the herpesviridae portal protein family. In terms of assembly, homododecamerizes. Interacts with terminase subunits TRM1 and TRM3.

The protein resides in the virion. It localises to the host nucleus. Functionally, forms a portal in the viral capsid through which viral DNA is translocated during DNA packaging. Assembles as a dodecamer at a single fivefold axe of the T=16 icosahedric capsid. Binds to the molecular motor that translocates the viral DNA, termed terminase. The sequence is that of Portal protein (UL104) from Homo sapiens (Human).